Consider the following 511-residue polypeptide: Inner membrane ABC transporter permease protein YnjC (511 aa).

Residues 1-8 are Cytoplasmic-facing; the sequence is MATPLRYA. A helical membrane pass occupies residues 9–29; sequence LIFLLWAMVAVIYAPLIPAAL. The Periplasmic portion of the chain corresponds to 30–62; it reads TLISPALSLTHWQALFADPQLPQALLATLVSTT. The 202-residue stretch at 54-255 folds into the ABC transmembrane type-1 1 domain; sequence LLATLVSTTI…MLLLAAYVLL (202 aa). The helical transmembrane segment at 63 to 83 threads the bilayer; sequence IAAVGALLIALLVIVALWPGP. Residues 84-91 are Cytoplasmic-facing; the sequence is KWQRMCAR. A helical transmembrane segment spans residues 92–112; sequence LPWLLAIPHVAFATSALLLFA. The Periplasmic segment spans residues 113-130; the sequence is DGGLLYDYFPYFTPPMDR. Residues 131-151 traverse the membrane as a helical segment; it reads FGIGLGLTLAVKESAFLLWIL. Residues 152–189 are Cytoplasmic-facing; the sequence is AAVLSEKWLLQQVIVLDSLGYSRWQCLNWLLLPSVAPA. The chain crosses the membrane as a helical span at residues 190–210; that stretch reads LAMAMLAIVAWSLSVVDVAII. The Periplasmic segment spans residues 211 to 239; that stretch reads LGPGNPPTLAVISWQWLTQGDIDQQTKGA. The helical transmembrane segment at 240-260 threads the bilayer; that stretch reads LASLLLMLLLAAYVLLSYLLW. Residues 261–284 are Cytoplasmic-facing; sequence RSWRRTIPRVDGVRKPATPLLPGN. The helical transmembrane segment at 285 to 305 threads the bilayer; it reads TLAIFLPLTGVLCVVLLAILA. Residues 306 to 318 lie on the Periplasmic side of the membrane; sequence DQSTINSEALINS. The 182-residue stretch at 315–496 folds into the ABC transmembrane type-1 2 domain; sequence LINSLTMGLV…LLPLIIFALT (182 aa). A helical transmembrane segment spans residues 319–339; that stretch reads LTMGLVATFIALLLLLLWLEW. Topologically, residues 340–345 are cytoplasmic; sequence GPQRRQ. The chain crosses the membrane as a helical span at residues 346 to 366; sequence LWLWLPILLPALPLVAGQYTL. The Periplasmic segment spans residues 367 to 374; that stretch reads ALWLKLDG. Residues 375 to 395 form a helical membrane-spanning segment; sequence SWTAVVWGHLLWVMPWMLFIL. Over 396–432 the chain is Cytoplasmic; the sequence is QPAWQRIDSRLILIAQTLGWSRAKIFFYVKCPLMLRP. The chain crosses the membrane as a helical span at residues 433–453; it reads VLIAFAVGFAVGIAQYMPTLW. Topologically, residues 454 to 485 are periplasmic; it reads LGAGRFPTLTTEAVALSSGGSNGILAAQALWQ. The chain crosses the membrane as a helical span at residues 486–506; the sequence is LLLPLIIFALTALVAKWVGYV. Topologically, residues 507-511 are cytoplasmic; the sequence is RQGLR.

It belongs to the binding-protein-dependent transport system permease family.

It is found in the cell inner membrane. Probably part of the binding-protein-dependent transport system YnjCD. Probably responsible for the translocation of the substrate across the membrane. The chain is Inner membrane ABC transporter permease protein YnjC (ynjC) from Escherichia coli (strain K12).